The sequence spans 122 residues: Gene 20 protein (122 aa).

The sequence is that of Gene 20 protein (20) from Mycobacterium phage D29 (Mycobacteriophage D29).